The chain runs to 252 residues: Triosephosphate isomerase (252 aa).

Substrate is bound at residue 10–12 (NWK). The active-site Electrophile is His96. Residue Glu168 is the Proton acceptor of the active site. Substrate-binding positions include Gly174, Ser214, and 235-236 (GG).

The protein belongs to the triosephosphate isomerase family. In terms of assembly, homodimer.

Its subcellular location is the cytoplasm. The enzyme catalyses D-glyceraldehyde 3-phosphate = dihydroxyacetone phosphate. It functions in the pathway carbohydrate biosynthesis; gluconeogenesis. Its pathway is carbohydrate degradation; glycolysis; D-glyceraldehyde 3-phosphate from glycerone phosphate: step 1/1. Its function is as follows. Involved in the gluconeogenesis. Catalyzes stereospecifically the conversion of dihydroxyacetone phosphate (DHAP) to D-glyceraldehyde-3-phosphate (G3P). The chain is Triosephosphate isomerase from Streptococcus pyogenes serotype M1.